A 443-amino-acid chain; its full sequence is Postreplication repair E3 ubiquitin-protein ligase rad18 (443 aa).

The segment at 30 to 68 adopts an RING-type zinc-finger fold; the sequence is CQVCKDFFDNPVITSCSHTFCSLCIRRCLSTEGKCPTCR. Residues 106–157 are disordered; the sequence is GTDDSGDLAAEEPASKKRKIEPNAIVGTDGLPEEGIRTRSQSRGASRQPQAT. A compositionally biased stretch (polar residues) spans 143-157; it reads TRSQSRGASRQPQAT. The segment at 175–202 adopts a UBZ4-type zinc-finger fold; that stretch reads LVPCPVCGRRMKEEAVFRHLDSCTGTAE. Zn(2+) contacts are provided by Cys178, Cys181, His193, and Cys197. The region spanning 239 to 273 is the SAP domain; that stretch reads LKDTVLRKKLKDLGIPNWGPRALLQRRHTEWLNLW. Polar residues-rich tracts occupy residues 350–363 and 431–443; these read IPNA…TPRS and PISS…KTPH. The interval 350–443 is disordered; sequence IPNASQANSD…SSASTHKTPH (94 aa).

The protein belongs to the RAD18 family. In terms of assembly, interacts with E2 UBC2, forming a complex with ubiquitin ligase activity.

The protein resides in the nucleus. It catalyses the reaction S-ubiquitinyl-[E2 ubiquitin-conjugating enzyme]-L-cysteine + [acceptor protein]-L-lysine = [E2 ubiquitin-conjugating enzyme]-L-cysteine + N(6)-ubiquitinyl-[acceptor protein]-L-lysine.. Its pathway is protein modification; protein ubiquitination. E3 RING-finger protein, member of the UBC2/RAD6 epistasis group. Associates to the E2 ubiquitin conjugating enzyme UBC2/RAD6 to form the UBC2-RAD18 ubiquitin ligase complex involved in postreplicative repair (PRR) of damaged DNA. The protein is Postreplication repair E3 ubiquitin-protein ligase rad18 (uvsH) of Emericella nidulans (strain FGSC A4 / ATCC 38163 / CBS 112.46 / NRRL 194 / M139) (Aspergillus nidulans).